We begin with the raw amino-acid sequence, 2614 residues long: Talin-B (2614 aa).

The 285-residue stretch at 85 to 369 (RPLKVRLMDE…GYIEILMKKR (285 aa)) folds into the FERM domain. The segment at 393-421 (RGQTSQATTSSSLSGYDGNGGREGQYSAP) is disordered. Low complexity predominate over residues 395-406 (QTSQATTSSSLS). Coiled coils occupy residues 1938–1965 (TQNIQEQVGKLAQDLKDSKNQLAEASGK) and 2033–2057 (NKAILDKSSQELEESIDSLANLVQS). In terms of domain architecture, I/LWEQ spans 2219 to 2460 (LLFAAGESLE…SIRKKEYSDQ (242 aa)). The disordered stretch occupies residues 2454-2557 (KKEYSDQTGN…AAPTAAAPNK (104 aa)). Residues 2473 to 2487 (KPTTSISVGITPTKR) are compositionally biased toward polar residues. Residues 2517–2537 (KKPAPSQAPSSPVAPVSAPVS) are compositionally biased toward low complexity. Positions 2538–2548 (KPSPKPAPKPA) are enriched in pro residues. In terms of domain architecture, HP spans 2553–2614 (AAPNKTYTLE…NNIKTKLGLF (62 aa)).

It localises to the cytoplasm. The protein localises to the cytoskeleton. Its subcellular location is the cell cortex. Functionally, actin-binding protein required for multicellular morphogenesis. Substrate of pkgB and/or pkbA. The polypeptide is Talin-B (talB) (Dictyostelium discoideum (Social amoeba)).